The primary structure comprises 709 residues: ATP-binding cassette sub-family F member 3 (709 aa).

N-acetylalanine is present on Ala-2. Residues 129-143 (RLKAKQEKRSEKETL) are compositionally biased toward basic and acidic residues. The segment at 129–171 (RLKAKQEKRSEKETLKTSSPLVLEEASASQAGSRKESRLESSG) is disordered. Phosphoserine occurs at positions 155, 157, and 161. Residues 161 to 171 (SRKESRLESSG) show a composition bias toward basic and acidic residues. ABC transporter domains are found at residues 178 to 424 (VRIE…LNQQ) and 492 to 707 (LQLD…RREG). ATP is bound at residue 210–217 (GRNGLGKT). Ser-283 carries the phosphoserine modification. 525–532 (GENGAGKS) lines the ATP pocket.

This sequence belongs to the ABC transporter superfamily. ABCF family. EF3 subfamily.

Functionally, displays an antiviral effect against flaviviruses such as west Nile virus (WNV) in the presence of OAS1B. The polypeptide is ATP-binding cassette sub-family F member 3 (Abcf3) (Rattus norvegicus (Rat)).